Here is a 176-residue protein sequence, read N- to C-terminus: WASH complex subunit 3 (176 aa).

Residues Glu47–Ile74 are a coiled coil. Disordered regions lie at residues Ala84–Val123 and Lys152–Glu176. The segment covering Thr104 to Glu115 has biased composition (low complexity).

This sequence belongs to the CCDC53 family. In terms of assembly, component of the WASH complex.

It is found in the early endosome. In terms of biological role, acts at least in part as component of the WASH complex which may regulate wash nucleation-promoting factor (NPF) activity and is required for its membrane targeting during endosomal sorting. During embryogenesis, not involved in the wash-dependent developmental migration of hemocytes anteriorly from the tail. The sequence is that of WASH complex subunit 3 from Drosophila melanogaster (Fruit fly).